The following is a 503-amino-acid chain: MSYFPWLTIIVVFPISAGSSIFFLPHRGNKVVRWYTICICLLELLLTTYAFCYHFQLDDPLIQLEEDYKWINILDFHWRLGIDGLSIGPTLLTGFITTLATLAAWPVTRDSQLFHFLMLAMYSGQIGSFSSRDLLLFFIMWELELIPVYLLLSMWGGKKRLYSATKFILYTAGGSIFLLMGVPGMGLYGSNEPTLNLETSANRSYPAALEIIFYFGFFIAYAVKSPIIPLHTWLPDTHGEAHYSTCMLLAGILLKMGAYGLVRINMELLPHAHSIFSPWLMIVGTIQIIYAASTSPGQPNFKKRIAYSSVSHMGFTIIGIASITDMGLNGAILQIISHGFIGAALFFLAGTSYDRIGLVYLDEMGGIAIPMPKIFTMFSSFSMASLALPGMSGFFAELVVFFGIITSTKYLLMPKILITFVMAIGMILTPIYSLSMLRQMFYGYKLFNVTNSYFVDSGPRELFVSICIFLPVIGIGIYPDFVLSLSVEKIEAILSNYLHKSFS.

13 consecutive transmembrane segments (helical) span residues 4–24, 37–57, 87–107, 134–154, 167–187, 208–228, 242–262, 272–292, 305–325, 330–350, 386–406, 416–436, and 462–482; these read FPWL…IFFL, ICIC…HFQL, IGPT…AWPV, LLLF…LLSM, FILY…GMGL, ALEI…SPII, HYST…YGLV, AHSI…IYAA, IAYS…SITD, GAIL…FLAG, LALP…GIIT, ILIT…SLSM, and LFVS…PDFV.

This sequence belongs to the complex I subunit 4 family.

It is found in the plastid. It localises to the chloroplast thylakoid membrane. The enzyme catalyses a plastoquinone + NADH + (n+1) H(+)(in) = a plastoquinol + NAD(+) + n H(+)(out). It catalyses the reaction a plastoquinone + NADPH + (n+1) H(+)(in) = a plastoquinol + NADP(+) + n H(+)(out). The chain is NAD(P)H-quinone oxidoreductase chain 4, chloroplastic from Drimys granadensis.